The following is a 378-amino-acid chain: C-C chemokine receptor type 7 (378 aa).

The first 24 residues, 1–24 (MDPGKPRKNVLVVALLVIFQVCFC), serve as a signal peptide directing secretion. Residues 25 to 59 (QDEVTDDYIGENTTVDYTLYESVCFKKDVRNFKAW) lie on the Extracellular side of the membrane. N-linked (GlcNAc...) asparagine glycosylation occurs at Asn36. Residues 60 to 86 (FLPLMYSVICFVGLLGNGLVILTYIYF) form a helical membrane-spanning segment. At 87–95 (KRLKTMTDT) the chain is on the cytoplasmic side. A helical membrane pass occupies residues 96–116 (YLLNLAVADILFLLILPFWAY). The Extracellular segment spans residues 117 to 130 (SEAKSWIFGVYLCK). A disulfide bridge links Cys129 with Cys210. Residues 131 to 152 (GIFGIYKLSFFSGMLLLLCISI) form a helical membrane-spanning segment. The Cytoplasmic portion of the chain corresponds to 153 to 170 (DRYVAIVQAVSAHRHRAR). A helical transmembrane segment spans residues 171–191 (VLLISKLSCVGIWMLALFLSI). Over 192–219 (PELLYSGLQKNSGEDTLRCSLVSAQVEA) the chain is Extracellular. A helical membrane pass occupies residues 220–247 (LITIQVAQMVFGFLVPMLAMSFCYLIII). At 248 to 263 (RTLLQARNFERNKAIK) the chain is on the cytoplasmic side. The chain crosses the membrane as a helical span at residues 264-289 (VIIAVVVVFIVFQLPYNGVVLAQTVA). Residues 290–313 (NFNITNSSCETSKQLNIAYDVTYS) lie on the Extracellular side of the membrane. Residues 314 to 331 (LASVRCCVNPFLYAFIGV) form a helical membrane-spanning segment. Residues 332–378 (KFRSDLFKLFKDLGCLSQERLRHWSSCRHVRNASVSMEAETTTTFSP) are Cytoplasmic-facing.

The protein belongs to the G-protein coupled receptor 1 family.

Its subcellular location is the cell membrane. In terms of biological role, receptor for the MIP-3-beta chemokine. This is C-C chemokine receptor type 7 (Ccr7) from Mus musculus (Mouse).